The chain runs to 137 residues: Fluoride-specific ion channel FluC 4 (137 aa).

Transmembrane regions (helical) follow at residues 20-40 (AAIG…ILGA), 43-63 (LWGT…FATL), 83-103 (GLCG…LLVL), and 110-130 (ALAY…LGLI). Residues Gly-86 and Thr-89 each contribute to the Na(+) site.

It belongs to the fluoride channel Fluc/FEX (TC 1.A.43) family.

Its subcellular location is the cell inner membrane. The enzyme catalyses fluoride(in) = fluoride(out). Na(+) is not transported, but it plays an essential structural role and its presence is essential for fluoride channel function. Functionally, fluoride-specific ion channel. Important for reducing fluoride concentration in the cell, thus reducing its toxicity. The protein is Fluoride-specific ion channel FluC 4 of Brucella suis biovar 1 (strain 1330).